We begin with the raw amino-acid sequence, 744 residues long: Elongation factor G, mitochondrial (744 aa).

Residues 39–316 (EKIRNIGISA…AVIDYLPNPG (278 aa)) enclose the tr-type G domain. Residues 48–55 (AHIDSGKT), 115–119 (DTPGH), and 169–172 (NKLD) each bind GTP. Residues 725–735 (VRQYQETQGAS) are compositionally biased toward polar residues. Residues 725–744 (VRQYQETQGASQPDKKKKKN) are disordered.

This sequence belongs to the TRAFAC class translation factor GTPase superfamily. Classic translation factor GTPase family. EF-G/EF-2 subfamily.

It localises to the mitochondrion. It participates in protein biosynthesis; polypeptide chain elongation. In terms of biological role, mitochondrial GTPase that catalyzes the GTP-dependent ribosomal translocation step during translation elongation. During this step, the ribosome changes from the pre-translocational (PRE) to the post-translocational (POST) state as the newly formed A-site-bound peptidyl-tRNA and P-site-bound deacylated tRNA move to the P and E sites, respectively. Catalyzes the coordinated movement of the two tRNA molecules, the mRNA and conformational changes in the ribosome. Essential during development as it acts as a retrograde signal from mitochondria to the nucleus to slow down cell proliferation if mitochondrial energy output is low. The protein is Elongation factor G, mitochondrial of Drosophila pseudoobscura pseudoobscura (Fruit fly).